A 232-amino-acid chain; its full sequence is 7-cyano-7-deazaguanine synthase (232 aa).

8–18 (FSGGQDSTTCL) contributes to the ATP binding site. The Zn(2+) site is built by Cys-187, Cys-196, Cys-199, and Cys-202.

It belongs to the QueC family. Zn(2+) serves as cofactor.

It carries out the reaction 7-carboxy-7-deazaguanine + NH4(+) + ATP = 7-cyano-7-deazaguanine + ADP + phosphate + H2O + H(+). Its pathway is purine metabolism; 7-cyano-7-deazaguanine biosynthesis. Its function is as follows. Catalyzes the ATP-dependent conversion of 7-carboxy-7-deazaguanine (CDG) to 7-cyano-7-deazaguanine (preQ(0)). This is 7-cyano-7-deazaguanine synthase from Shewanella denitrificans (strain OS217 / ATCC BAA-1090 / DSM 15013).